The primary structure comprises 293 residues: MAITAQQVKELRQKTGAGMMDCKKALTETDGDMDKAIDLLREKGIAKAAKKADRIAAEGSTLIKTDGNKGVILEVNSETDFVAKNEGFKELLNTLADHLLANAPADLEEAMGQKMENGSTVEEYITSNVAKIGEKITLRRFAVISKEDSEAFGAYLHMGGRIGVLSVLSGTTDEDLAKDIAMHVAAVNPRYISRDQVSEEEANHERQILTQQALQEGKPENIVAKMVEGRLNKFFEEICLLDQAFVKNPDEKVKQVVAAKNASVKTYVRYEVGEGIEKRQENFAEEVMNQVKK.

Residues 79–82 (TDFV) form an involved in Mg(2+) ion dislocation from EF-Tu region.

This sequence belongs to the EF-Ts family.

The protein resides in the cytoplasm. Associates with the EF-Tu.GDP complex and induces the exchange of GDP to GTP. It remains bound to the aminoacyl-tRNA.EF-Tu.GTP complex up to the GTP hydrolysis stage on the ribosome. The sequence is that of Elongation factor Ts from Bacillus velezensis (strain DSM 23117 / BGSC 10A6 / LMG 26770 / FZB42) (Bacillus amyloliquefaciens subsp. plantarum).